The sequence spans 431 residues: Hydroxylamine reductase (431 aa).

Positions 5, 8, 17, and 23 each coordinate [4Fe-4S] cluster. Hybrid [4Fe-2O-2S] cluster contacts are provided by His-131, Glu-155, Cys-199, Cys-286, Cys-314, Cys-339, Glu-373, and Lys-375. A Cysteine persulfide modification is found at Cys-286.

The protein belongs to the HCP family. It depends on [4Fe-4S] cluster as a cofactor. The cofactor is hybrid [4Fe-2O-2S] cluster.

The protein localises to the cytoplasm. The enzyme catalyses A + NH4(+) + H2O = hydroxylamine + AH2 + H(+). Its function is as follows. Catalyzes the reduction of hydroxylamine to form NH(3) and H(2)O. The polypeptide is Hydroxylamine reductase (Thermotoga petrophila (strain ATCC BAA-488 / DSM 13995 / JCM 10881 / RKU-1)).